Reading from the N-terminus, the 525-residue chain is UPF0288 protein MA_3997 (525 aa).

It belongs to the UPF0288 family.

The sequence is that of UPF0288 protein MA_3997 from Methanosarcina acetivorans (strain ATCC 35395 / DSM 2834 / JCM 12185 / C2A).